Consider the following 151-residue polypeptide: Neuroglobin (151 aa).

In terms of domain architecture, Globin spans 1–149 (MERPEPELIR…VVQAMSRGWD (149 aa)). 2 residues coordinate heme b: H64 and H96.

This sequence belongs to the globin family. In terms of assembly, monomer. Homodimer and homotetramer; disulfide-linked. Mainly monomeric but also detected as part of homodimers and homotetramers. Interacts with 14-3-3 proteins; regulates the phosphorylation of NGB. Could interact (ferrous form) with G-alpha(i) proteins (GTP-bound form). Phosphorylated during hypoxia by ERK1/ERK2. Phosphorylation regulates the heme pocket hexacoordination preventing the association of His-64 with the heme metal center. Thereby, promotes the access of dioxygen and nitrite to the heme and stimulates the nitrite reductase activity. Phosphorylation during hypoxia is stabilized by 14-3-3 proteins.

The protein resides in the cytoplasm. It localises to the cytosol. The protein localises to the mitochondrion matrix. It catalyses the reaction Fe(III)-heme b-[protein] + nitric oxide + H2O = Fe(II)-heme b-[protein] + nitrite + 2 H(+). In terms of biological role, monomeric globin with a bis-histidyl six-coordinate heme-iron atom through which it can bind dioxygen, carbon monoxide and nitric oxide. Could help transport oxygen and increase its availability to the metabolically active neuronal tissues, though its low quantity in tissues as well as its high affinity for dioxygen, which may limit its oxygen-releasing ability, argue against it. The ferrous/deoxygenated form exhibits a nitrite reductase activity and it could produce nitric oxide which in turn inhibits cellular respiration in response to hypoxia. In its ferrous/deoxygenated state, it may also exhibit GDI (Guanine nucleotide Dissociation Inhibitor) activity toward heterotrimeric G-alpha proteins, thereby regulating signal transduction to facilitate neuroprotective responses in the wake of hypoxia and associated oxidative stress. The protein is Neuroglobin of Canis lupus familiaris (Dog).